Consider the following 406-residue polypeptide: Phosphopentomutase (406 aa).

6 residues coordinate Mn(2+): Asp10, Asp305, His310, Asp346, His347, and His358.

This sequence belongs to the phosphopentomutase family. Mn(2+) is required as a cofactor.

It localises to the cytoplasm. The catalysed reaction is 2-deoxy-alpha-D-ribose 1-phosphate = 2-deoxy-D-ribose 5-phosphate. The enzyme catalyses alpha-D-ribose 1-phosphate = D-ribose 5-phosphate. Its pathway is carbohydrate degradation; 2-deoxy-D-ribose 1-phosphate degradation; D-glyceraldehyde 3-phosphate and acetaldehyde from 2-deoxy-alpha-D-ribose 1-phosphate: step 1/2. Its function is as follows. Isomerase that catalyzes the conversion of deoxy-ribose 1-phosphate (dRib-1-P) and ribose 1-phosphate (Rib-1-P) to deoxy-ribose 5-phosphate (dRib-5-P) and ribose 5-phosphate (Rib-5-P), respectively. In Rhizobium etli (strain ATCC 51251 / DSM 11541 / JCM 21823 / NBRC 15573 / CFN 42), this protein is Phosphopentomutase.